The sequence spans 501 residues: Zinc finger and SCAN domain-containing protein 12 (501 aa).

Residues Lys20 and Lys26 each participate in a glycyl lysine isopeptide (Lys-Gly) (interchain with G-Cter in SUMO2) cross-link. Positions 51–132 constitute an SCAN box domain; it reads QFCYQETSGP…DLERELDELG (82 aa). The interval 175–194 is disordered; the sequence is REAQEEQVSGVETGNEPRNV. A compositionally biased stretch (polar residues) spans 180–194; it reads EQVSGVETGNEPRNV. Lys197 participates in a covalent cross-link: Glycyl lysine isopeptide (Lys-Gly) (interchain with G-Cter in SUMO2). A disordered region spans residues 223–255; that stretch reads EAHNPGEESSGISHEDSQPLRNENGVNSPANSE. Residues 241–253 are compositionally biased toward polar residues; the sequence is PLRNENGVNSPAN. 6 C2H2-type zinc fingers span residues 269-291, 297-319, 325-347, 353-375, 381-403, and 409-431; these read HGCD…KRVH, YKCE…KVVH, YKCN…QRLH, YHCN…LKSH, YQCL…QGVH, and YECN…QETH. Residues 429 to 450 form a disordered region; it reads ETHHKEKPFTQSGPIQQQRNHT. Positions 437 to 447 are enriched in polar residues; it reads FTQSGPIQQQR. A C2H2-type 7 zinc finger spans residues 455–477; sequence YKCSVCGKAFIQKISLIEHEQIH. The C2H2-type 8; degenerate zinc finger occupies 483-501; that stretch reads YKCAEGGKAFIQMSELTEH.

The protein belongs to the krueppel C2H2-type zinc-finger protein family. Testis specific.

Its subcellular location is the nucleus. May be involved in transcriptional regulation. The protein is Zinc finger and SCAN domain-containing protein 12 (Zscan12) of Mus musculus (Mouse).